A 380-amino-acid polypeptide reads, in one-letter code: Homoserine O-succinyltransferase (380 aa).

An AB hydrolase-1 domain is found at 51–362 (NAVLICHALS…SKHGHDAFLL (312 aa)). Ser-157 acts as the Nucleophile in catalysis. Arg-227 provides a ligand contact to substrate. Catalysis depends on residues Asp-324 and His-357. Asp-358 provides a ligand contact to substrate.

It belongs to the AB hydrolase superfamily. MetX family. Homodimer.

Its subcellular location is the cytoplasm. The enzyme catalyses L-homoserine + succinyl-CoA = O-succinyl-L-homoserine + CoA. It participates in amino-acid biosynthesis; L-methionine biosynthesis via de novo pathway; O-succinyl-L-homoserine from L-homoserine: step 1/1. Transfers a succinyl group from succinyl-CoA to L-homoserine, forming succinyl-L-homoserine. The sequence is that of Homoserine O-succinyltransferase from Cellvibrio japonicus (strain Ueda107) (Pseudomonas fluorescens subsp. cellulosa).